The chain runs to 196 residues: Large ribosomal subunit protein mL66 (196 aa).

The N-terminal 34 residues, 1–34 (MAALNVLVSGCGRFLRGLLTGPTVTSWARPPARG), are a transit peptide targeting the mitochondrion.

Belongs to the bacterial ribosomal protein bS18 family. Mitochondrion-specific ribosomal protein mL66 subfamily. In terms of assembly, component of the mitochondrial ribosome small subunit (28S) which comprises a 12S rRNA and about 30 distinct proteins.

It is found in the mitochondrion. The polypeptide is Large ribosomal subunit protein mL66 (MRPS18A) (Bos taurus (Bovine)).